We begin with the raw amino-acid sequence, 441 residues long: MLSAFISSLRTVDLRRKILFTLGIVILYRVGAALPSPGVNFPNVQQCIKEASAGEAGQIYSLINLFSGGALLKLTVFAVGVMPYITASIIVQLLTVVIPRFEELRKEGQAGQSKMTQYTRYLAIALAILQATSIVALAANGGLLQGCSLDIIADQSIFTLVVIVLVMTGGAALVMWMGELITERGIGNGMSLLIFVGIAARIPAEGQSILESRGGVVFTAVCAAALIIIVGVVFVEQGQRRIPVQYAKRMVGRRMYGGTSTYLPLKVNQAGVIPVIFASSLIYIPHLITQLIRSGSGVVGNSWWDKFVGTYLSDPSNLVYIGIYFGLIIFFTYFYVSITFNPDERADEMKKFGGFIPGIRPGRPTADYLRYVLSRITLPGSIYLGVIAVLPNLFLQIGAGGTVQNLPFGGTAVLIMIGVGLDTVKQIESQLMQRNYEGFLK.

A run of 10 helical transmembrane segments spans residues 18-38, 78-98, 124-144, 157-177, 180-200, 215-235, 272-292, 318-338, 382-402, and 403-423; these read ILFTLGIVILYRVGAALPSPG, AVGVMPYITASIIVQLLTVVI, IALAILQATSIVALAANGGLL, IFTLVVIVLVMTGGAALVMWM, LITERGIGNGMSLLIFVGIAA, GVVFTAVCAAALIIIVGVVFV, VIPVIFASSLIYIPHLITQLI, LVYIGIYFGLIIFFTYFYVSI, IYLGVIAVLPNLFLQIGAGGT, and VQNLPFGGTAVLIMIGVGLDT.

Belongs to the SecY/SEC61-alpha family. In terms of assembly, component of the Sec protein translocase complex. Heterotrimer consisting of SecY, SecE and SecG subunits. The heterotrimers can form oligomers, although 1 heterotrimer is thought to be able to translocate proteins. Interacts with the ribosome. Interacts with SecDF, and other proteins may be involved. Interacts with SecA.

Its subcellular location is the cell membrane. In terms of biological role, the central subunit of the protein translocation channel SecYEG. Consists of two halves formed by TMs 1-5 and 6-10. These two domains form a lateral gate at the front which open onto the bilayer between TMs 2 and 7, and are clamped together by SecE at the back. The channel is closed by both a pore ring composed of hydrophobic SecY resides and a short helix (helix 2A) on the extracellular side of the membrane which forms a plug. The plug probably moves laterally to allow the channel to open. The ring and the pore may move independently. In Mycobacterium bovis (strain ATCC BAA-935 / AF2122/97), this protein is Protein translocase subunit SecY.